A 235-amino-acid chain; its full sequence is Putative cobalt transport protein CbiM 2 (235 aa).

7 consecutive transmembrane segments (helical) span residues 9 to 29, 41 to 61, 80 to 100, 107 to 127, 135 to 155, 160 to 180, and 181 to 201; these read PAGW…MGII, YLPL…LKLP, FGYC…ALLL, TMGA…YAVY, INIY…TYII, LALA…AFFS, and IFAI…ALVF.

It belongs to the CbiM family. Forms an energy-coupling factor (ECF) transporter complex composed of an ATP-binding protein (A component, CbiO), a transmembrane protein (T component, CbiQ) and 2 possible substrate-capture proteins (S components, CbiM and CbiN) of unknown stoichimetry.

It localises to the cell membrane. It participates in cofactor biosynthesis; adenosylcobalamin biosynthesis. Part of the energy-coupling factor (ECF) transporter complex CbiMNOQ involved in cobalt import. This Methanosphaerula palustris (strain ATCC BAA-1556 / DSM 19958 / E1-9c) protein is Putative cobalt transport protein CbiM 2.